The sequence spans 247 residues: UPF0309 protein LMOf2365_2617 (247 aa).

The SIS domain occupies 31–214; that stretch reads VAESIENDGV…ETMVNDNFTP (184 aa).

This sequence belongs to the UPF0309 family.

In Listeria monocytogenes serotype 4b (strain F2365), this protein is UPF0309 protein LMOf2365_2617.